We begin with the raw amino-acid sequence, 434 residues long: Probable G-protein coupled receptor B0563.6 (434 aa).

An N-linked (GlcNAc...) asparagine glycan is attached at asparagine 12. A run of 2 helical transmembrane segments spans residues 30 to 50 (VLPC…MVLA) and 65 to 85 (LAVA…TEYL). Asparagine 88 is a glycosylation site (N-linked (GlcNAc...) asparagine). The next 2 membrane-spanning stretches (helical) occupy residues 105-125 (LMLT…VALS) and 147-167 (ATRA…PYAI). A glycan (N-linked (GlcNAc...) asparagine) is linked at asparagine 181. Helical transmembrane passes span 208–228 (ILRF…MIAF) and 258–278 (GGTV…LLLI). 2 N-linked (GlcNAc...) asparagine glycosylation sites follow: asparagine 429 and asparagine 430.

This sequence belongs to the G-protein coupled receptor 1 family.

The protein localises to the cell membrane. Not known. Putative receptor. The protein is Probable G-protein coupled receptor B0563.6 of Caenorhabditis elegans.